We begin with the raw amino-acid sequence, 233 residues long: Phosphoribosylformylglycinamidine synthase subunit PurQ (233 aa).

One can recognise a Glutamine amidotransferase type-1 domain in the interval Arg-9 to Ser-233. The Nucleophile role is filled by Cys-92. Catalysis depends on residues His-201 and Glu-203.

In terms of assembly, part of the FGAM synthase complex composed of 1 PurL, 1 PurQ and 2 PurS subunits.

It is found in the cytoplasm. It catalyses the reaction N(2)-formyl-N(1)-(5-phospho-beta-D-ribosyl)glycinamide + L-glutamine + ATP + H2O = 2-formamido-N(1)-(5-O-phospho-beta-D-ribosyl)acetamidine + L-glutamate + ADP + phosphate + H(+). The catalysed reaction is L-glutamine + H2O = L-glutamate + NH4(+). It participates in purine metabolism; IMP biosynthesis via de novo pathway; 5-amino-1-(5-phospho-D-ribosyl)imidazole from N(2)-formyl-N(1)-(5-phospho-D-ribosyl)glycinamide: step 1/2. In terms of biological role, part of the phosphoribosylformylglycinamidine synthase complex involved in the purines biosynthetic pathway. Catalyzes the ATP-dependent conversion of formylglycinamide ribonucleotide (FGAR) and glutamine to yield formylglycinamidine ribonucleotide (FGAM) and glutamate. The FGAM synthase complex is composed of three subunits. PurQ produces an ammonia molecule by converting glutamine to glutamate. PurL transfers the ammonia molecule to FGAR to form FGAM in an ATP-dependent manner. PurS interacts with PurQ and PurL and is thought to assist in the transfer of the ammonia molecule from PurQ to PurL. The chain is Phosphoribosylformylglycinamidine synthase subunit PurQ from Frankia casuarinae (strain DSM 45818 / CECT 9043 / HFP020203 / CcI3).